The chain runs to 211 residues: Prolactin-1 (211 aa).

Positions 1 to 23 (MARRSQGTKLHLAVLCLVVSCHA) are cleaved as a signal peptide. 2 cysteine pairs are disulfide-bonded: Cys69–Cys184 and Cys201–Cys211.

The protein belongs to the somatotropin/prolactin family.

The protein localises to the secreted. In Oncorhynchus keta (Chum salmon), this protein is Prolactin-1 (prl1).